The following is a 137-amino-acid chain: Large ribosomal subunit protein uL16 (137 aa).

The protein belongs to the universal ribosomal protein uL16 family. Part of the 50S ribosomal subunit.

Functionally, binds 23S rRNA and is also seen to make contacts with the A and possibly P site tRNAs. The chain is Large ribosomal subunit protein uL16 from Azorhizobium caulinodans (strain ATCC 43989 / DSM 5975 / JCM 20966 / LMG 6465 / NBRC 14845 / NCIMB 13405 / ORS 571).